The following is a 55-amino-acid chain: Male-specific sperm protein Mst84Dc (55 aa).

It belongs to the MST(3)CGP family. As to expression, testis.

This chain is Male-specific sperm protein Mst84Dc (Mst84Dc), found in Drosophila melanogaster (Fruit fly).